The chain runs to 219 residues: Ribosomal RNA small subunit methyltransferase Nep1 (219 aa).

Residues Gly-178, Gly-183, and 196–201 contribute to the S-adenosyl-L-methionine site; that span reads LYKAPL.

It belongs to the class IV-like SAM-binding methyltransferase superfamily. RNA methyltransferase NEP1 family. In terms of assembly, homodimer.

It carries out the reaction a pseudouridine in rRNA + S-adenosyl-L-methionine = an N(1)-methylpseudouridine in rRNA + S-adenosyl-L-homocysteine + H(+). Methyltransferase involved in ribosomal biogenesis. Specifically catalyzes the N1-methylation of the pseudouridine corresponding to position 914 in M.jannaschii 16S rRNA. The chain is Ribosomal RNA small subunit methyltransferase Nep1 from Thermococcus onnurineus (strain NA1).